A 657-amino-acid chain; its full sequence is Trifunctional protein RibF/MnmA (657 aa).

The segment at 1–141 is FMN adenylyltransferase; it reads MLSIINLTSK…VVKKDHCSTS (141 aa). Positions 158 to 282 are riboflavin kinase; sequence LLLTPFYLKG…DKKAALSFFH (125 aa). The interval 283-657 is tRNA-specific 2-thiouridylase MnmA; that stretch reads KQEKPKVVVA…GGGKITKIIK (375 aa). Residues 292–299 and Met318 contribute to the ATP site; that span reads ALSGGVDS. The segment at 389–391 is interaction with target base in tRNA; the sequence is NPD. Cys394 serves as the catalytic Nucleophile. Cys394 and Cys492 are joined by a disulfide. Gly420 contacts ATP. Residues 442-444 form an interaction with tRNA region; the sequence is KDQ. The Cysteine persulfide intermediate role is filled by Cys492.

It in the N-terminal section; belongs to the RibF family. This sequence in the C-terminal section; belongs to the MnmA/TRMU family.

It is found in the cytoplasm. The enzyme catalyses riboflavin + ATP = FMN + ADP + H(+). It catalyses the reaction FMN + ATP + H(+) = FAD + diphosphate. It carries out the reaction S-sulfanyl-L-cysteinyl-[protein] + uridine(34) in tRNA + AH2 + ATP = 2-thiouridine(34) in tRNA + L-cysteinyl-[protein] + A + AMP + diphosphate + H(+). It participates in cofactor biosynthesis; FAD biosynthesis; FAD from FMN: step 1/1. Its pathway is cofactor biosynthesis; FMN biosynthesis; FMN from riboflavin (ATP route): step 1/1. Involved in FAD and FMN biosynthesis. Functionally, catalyzes the 2-thiolation of uridine at the wobble position (U34) of tRNA, leading to the formation of s(2)U34. This is Trifunctional protein RibF/MnmA (ribF/mnmA) from Mycoplasmoides gallisepticum (strain R(low / passage 15 / clone 2)) (Mycoplasma gallisepticum).